An 810-amino-acid chain; its full sequence is Hemoglobin-haptoglobin utilization protein B (810 aa).

A signal peptide spans 1–22 (MPIPFKPVLAAAAIAQAFPAFA). A TBDR plug domain is found at 34-166 (NEITVTGTHK…LGGAVNYQTK (133 aa)). Residues 175–810 (DKPYHLGIKG…SYNFTIEAKF (636 aa)) form the TBDR beta-barrel domain. Residues 793 to 810 (QRFTSPGRSYNFTIEAKF) carry the TonB C-terminal box motif.

The protein belongs to the TonB-dependent receptor family.

It localises to the cell outer membrane. In terms of biological role, acts as a receptor for hemoglobin or the hemoglobin/haptoglobin complex and is required for heme uptake. This Neisseria meningitidis serogroup A / serotype 4A (strain DSM 15465 / Z2491) protein is Hemoglobin-haptoglobin utilization protein B (hpuB).